Consider the following 210-residue polypeptide: Na(+)-translocating NADH-quinone reductase subunit D (210 aa).

5 helical membrane passes run 42–62 (FVMT…VSLI), 72–92 (IIVQ…VLKA), 103–123 (VFVG…AFAM), 131–151 (LIDG…VGFF), and 178–198 (NGLM…IWVI).

This sequence belongs to the NqrDE/RnfAE family. In terms of assembly, composed of six subunits; NqrA, NqrB, NqrC, NqrD, NqrE and NqrF.

It is found in the cell inner membrane. It catalyses the reaction a ubiquinone + n Na(+)(in) + NADH + H(+) = a ubiquinol + n Na(+)(out) + NAD(+). In terms of biological role, NQR complex catalyzes the reduction of ubiquinone-1 to ubiquinol by two successive reactions, coupled with the transport of Na(+) ions from the cytoplasm to the periplasm. NqrA to NqrE are probably involved in the second step, the conversion of ubisemiquinone to ubiquinol. The sequence is that of Na(+)-translocating NADH-quinone reductase subunit D from Vibrio campbellii (strain ATCC BAA-1116).